The primary structure comprises 414 residues: ORC1-type DNA replication protein 11 (414 aa).

ATP-binding positions include 60–64 (VGKTA), Tyr-207, and Arg-219.

It belongs to the CDC6/cdc18 family.

In terms of biological role, involved in regulation of DNA replication. This chain is ORC1-type DNA replication protein 11 (cdc6k), found in Haloarcula marismortui (strain ATCC 43049 / DSM 3752 / JCM 8966 / VKM B-1809) (Halobacterium marismortui).